The primary structure comprises 353 residues: Melatonin receptor type 1A (353 aa).

Topologically, residues 1–32 are extracellular; that stretch reads MKGNVSELLNATQQAPGGGEGGRPRPSWLAST. N-linked (GlcNAc...) asparagine glycosylation is found at asparagine 4 and asparagine 10. The helical transmembrane segment at 33-53 threads the bilayer; it reads LAFILIFTIVVDILGNLLVIL. Residues 54–66 are Cytoplasmic-facing; that stretch reads SVYRNKKLRNSGN. Residues 67-87 form a helical membrane-spanning segment; the sequence is IFVVSLAVADLVVAVYPYPLV. Over 88–105 the chain is Extracellular; that stretch reads LTSILNNGWNLGYLHCQV. Cysteine 103 and cysteine 180 form a disulfide bridge. Residues 106 to 126 traverse the membrane as a helical segment; it reads SAFLMGLSVIGSIFNITGIAM. Residues 127 to 145 are Cytoplasmic-facing; the sequence is NRYCYICHSLKYDKIYSNK. The chain crosses the membrane as a helical span at residues 146-166; that stretch reads NSLCYVFLIWMLTLIAIMPNL. Over 167–190 the chain is Extracellular; the sequence is QTGTLQYDPRIYSCTFTQSVSSAY. A helical membrane pass occupies residues 191 to 211; it reads TIAVVVFHFIVPMIIVIFCYL. The Cytoplasmic portion of the chain corresponds to 212–243; the sequence is RIWVLVLQVRRRVKPDNKPKLKPQDFRNFVTM. The helical transmembrane segment at 244-264 threads the bilayer; that stretch reads FVVFVLFAICWAPLNLIGLIV. The Extracellular portion of the chain corresponds to 265–277; that stretch reads ASDPATMVPRIPE. The helical transmembrane segment at 278 to 298 threads the bilayer; sequence WLFVASYYLAYFNSCLNAIIY. Residues 299–353 lie on the Cytoplasmic side of the membrane; sequence GLLNQNFRKEYKKIIVSLCTAKMFFVESSNEEADKIKCKPSPLIPNNNLIKVDSV.

This sequence belongs to the G-protein coupled receptor 1 family.

It localises to the cell membrane. Functionally, high affinity receptor for melatonin. Likely to mediate the reproductive and circadian actions of melatonin. The activity of this receptor is mediated by pertussis toxin sensitive G proteins that inhibit adenylate cyclase activity. Possibly involved in sleep induction, by melatonin activation of the potassium channel KCNMA1/BK and the dissociation of G-beta and G-gamma subunits, thereby decreasing synaptic transmission. The chain is Melatonin receptor type 1A (Mtnr1a) from Mus musculus (Mouse).